The sequence spans 196 residues: ATP-dependent Clp protease proteolytic subunit (196 aa).

Catalysis depends on Ser-98, which acts as the Nucleophile. His-123 is an active-site residue.

This sequence belongs to the peptidase S14 family. Fourteen ClpP subunits assemble into 2 heptameric rings which stack back to back to give a disk-like structure with a central cavity, resembling the structure of eukaryotic proteasomes.

It localises to the cytoplasm. It carries out the reaction Hydrolysis of proteins to small peptides in the presence of ATP and magnesium. alpha-casein is the usual test substrate. In the absence of ATP, only oligopeptides shorter than five residues are hydrolyzed (such as succinyl-Leu-Tyr-|-NHMec, and Leu-Tyr-Leu-|-Tyr-Trp, in which cleavage of the -Tyr-|-Leu- and -Tyr-|-Trp bonds also occurs).. Functionally, cleaves peptides in various proteins in a process that requires ATP hydrolysis. Has a chymotrypsin-like activity. Plays a major role in the degradation of misfolded proteins. In Lactiplantibacillus plantarum (strain ATCC BAA-793 / NCIMB 8826 / WCFS1) (Lactobacillus plantarum), this protein is ATP-dependent Clp protease proteolytic subunit.